Consider the following 459-residue polypeptide: Cysteine--tRNA ligase (459 aa).

Zn(2+) is bound at residue cysteine 27. The short motif at 29–39 (VTVYDDCHIGH) is the 'HIGH' region element. Cysteine 208, histidine 233, and glutamate 237 together coordinate Zn(2+). Positions 265 to 269 (KMSKS) match the 'KMSKS' region motif. Lysine 268 provides a ligand contact to ATP.

Belongs to the class-I aminoacyl-tRNA synthetase family. Monomer. It depends on Zn(2+) as a cofactor.

Its subcellular location is the cytoplasm. It catalyses the reaction tRNA(Cys) + L-cysteine + ATP = L-cysteinyl-tRNA(Cys) + AMP + diphosphate. The sequence is that of Cysteine--tRNA ligase from Francisella tularensis subsp. mediasiatica (strain FSC147).